We begin with the raw amino-acid sequence, 263 residues long: MTPIKVVVHGASGKMGQEVLKTLCQENNLLPVGAVDIRAKSPALPLPDGSGSIPYSADLSSVLSQTKPDVMVDFTIAKASMPAIRIAAAHKVNLVIGTTGFSPEEISEIEQLAKTNDIGIIVAPNFALGAIIMVHLAQEASRFLASAEVIELHHDKKLDSPSGTALATAAAMLKTRGEAFNKPAKENMSDARGQEHDGIRVHSVRLPGLLAHQEVIFGAAGQSLTIRHDAFSRECYMPGVVLAIKEIVQTKGFVFGLDKLLKL.

10–15 (GASGKM) is an NAD(+) binding site. NADP(+) is bound at residue Arg38. NAD(+)-binding positions include 97 to 99 (GTT) and 123 to 126 (APNF). His153 serves as the catalytic Proton donor/acceptor. His154 is a (S)-2,3,4,5-tetrahydrodipicolinate binding site. Catalysis depends on Lys157, which acts as the Proton donor. Residue 163 to 164 (GT) coordinates (S)-2,3,4,5-tetrahydrodipicolinate.

This sequence belongs to the DapB family.

The protein localises to the cytoplasm. The catalysed reaction is (S)-2,3,4,5-tetrahydrodipicolinate + NAD(+) + H2O = (2S,4S)-4-hydroxy-2,3,4,5-tetrahydrodipicolinate + NADH + H(+). The enzyme catalyses (S)-2,3,4,5-tetrahydrodipicolinate + NADP(+) + H2O = (2S,4S)-4-hydroxy-2,3,4,5-tetrahydrodipicolinate + NADPH + H(+). It functions in the pathway amino-acid biosynthesis; L-lysine biosynthesis via DAP pathway; (S)-tetrahydrodipicolinate from L-aspartate: step 4/4. Functionally, catalyzes the conversion of 4-hydroxy-tetrahydrodipicolinate (HTPA) to tetrahydrodipicolinate. In Dehalococcoides mccartyi (strain ATCC BAA-2266 / KCTC 15142 / 195) (Dehalococcoides ethenogenes (strain 195)), this protein is 4-hydroxy-tetrahydrodipicolinate reductase.